Reading from the N-terminus, the 132-residue chain is Extracellular small neutral protease (132 aa).

Ca(2+) is bound by residues Asp76 and Thr78. Zn(2+) is bound at residue His83. Glu84 is a catalytic residue. The Zn(2+) site is built by His87 and Asp93. A disulfide bridge connects residues Cys99 and Cys112.

It belongs to the peptidase M7 family. Ca(2+) is required as a cofactor. Requires Zn(2+) as cofactor.

It localises to the secreted. It carries out the reaction Hydrolyzes proteins with a preference for Tyr or Phe in the P1' position. Has no action on amino-acid p-nitroanilides.. Functionally, specifically hydrolyzes the peptide bond at the imino side of aromatic residues. The protein is Extracellular small neutral protease (snpA) of Streptomyces caespitosus.